Here is a 248-residue protein sequence, read N- to C-terminus: N-acylneuraminate-9-phosphatase (248 aa).

Residue Asp-12 coordinates Mg(2+). Leu-13, Asp-14, Thr-131, Asn-132, and Lys-164 together coordinate phosphate. Asp-14 is a Mg(2+) binding site. Asp-189 contributes to the Mg(2+) binding site.

Belongs to the HAD-like hydrolase superfamily. NANP family. Requires Mg(2+) as cofactor.

It catalyses the reaction N-acetylneuraminate 9-phosphate + H2O = N-acetylneuraminate + phosphate. It carries out the reaction N-glycoloylneuraminate 9-phosphate + H2O = N-glycoloylneuraminate + phosphate. Its pathway is amino-sugar metabolism; N-acetylneuraminate biosynthesis. Inhibited by calcium. Inhibited by vanadate, sodium orthovanadate and phosphonate. Catalyzes the dephosphorylation of N-acylneuraminate 9-phosphate (Neu5Ac-9-P) to N-acetylneuraminic acid (Neu5Ac or sialic acid). Can also use N-glycoloylneuraminate 9-phosphate as substrate. The protein is N-acylneuraminate-9-phosphatase of Homo sapiens (Human).